The sequence spans 234 residues: Ribonuclease HII (234 aa).

The RNase H type-2 domain maps to 47 to 234 (IRIAGVDEVG…KTVHKILYQE (188 aa)). A divalent metal cation-binding residues include aspartate 53, glutamate 54, and aspartate 144.

This sequence belongs to the RNase HII family. Requires Mn(2+) as cofactor. Mg(2+) serves as cofactor.

Its subcellular location is the cytoplasm. It catalyses the reaction Endonucleolytic cleavage to 5'-phosphomonoester.. Its function is as follows. Endonuclease that specifically degrades the RNA of RNA-DNA hybrids. This chain is Ribonuclease HII, found in Ruegeria pomeroyi (strain ATCC 700808 / DSM 15171 / DSS-3) (Silicibacter pomeroyi).